The primary structure comprises 181 residues: ATP synthase subunit delta (181 aa).

Belongs to the ATPase delta chain family. In terms of assembly, F-type ATPases have 2 components, F(1) - the catalytic core - and F(0) - the membrane proton channel. F(1) has five subunits: alpha(3), beta(3), gamma(1), delta(1), epsilon(1). F(0) has three main subunits: a(1), b(2) and c(10-14). The alpha and beta chains form an alternating ring which encloses part of the gamma chain. F(1) is attached to F(0) by a central stalk formed by the gamma and epsilon chains, while a peripheral stalk is formed by the delta and b chains.

The protein resides in the cell membrane. Its function is as follows. F(1)F(0) ATP synthase produces ATP from ADP in the presence of a proton or sodium gradient. F-type ATPases consist of two structural domains, F(1) containing the extramembraneous catalytic core and F(0) containing the membrane proton channel, linked together by a central stalk and a peripheral stalk. During catalysis, ATP synthesis in the catalytic domain of F(1) is coupled via a rotary mechanism of the central stalk subunits to proton translocation. Functionally, this protein is part of the stalk that links CF(0) to CF(1). It either transmits conformational changes from CF(0) to CF(1) or is implicated in proton conduction. The chain is ATP synthase subunit delta from Lactiplantibacillus plantarum (strain ATCC BAA-793 / NCIMB 8826 / WCFS1) (Lactobacillus plantarum).